The sequence spans 300 residues: Acetylglutamate kinase (300 aa).

Substrate contacts are provided by residues 72–73, Arg-94, and Asn-197; that span reads GG.

The protein belongs to the acetylglutamate kinase family. ArgB subfamily.

The protein localises to the cytoplasm. The catalysed reaction is N-acetyl-L-glutamate + ATP = N-acetyl-L-glutamyl 5-phosphate + ADP. Its pathway is amino-acid biosynthesis; L-arginine biosynthesis; N(2)-acetyl-L-ornithine from L-glutamate: step 2/4. Its function is as follows. Catalyzes the ATP-dependent phosphorylation of N-acetyl-L-glutamate. The polypeptide is Acetylglutamate kinase (Azoarcus sp. (strain BH72)).